Consider the following 308-residue polypeptide: Beta-1,3-galactosyltransferase 5 (308 aa).

Topologically, residues 1–7 (MAHMKTR) are cytoplasmic. A helical; Signal-anchor for type II membrane protein membrane pass occupies residues 8-25 (LVYASILMMGALCLYFSM). Residues 26-308 (DSFRELPFVF…NSKEQDCPAV (283 aa)) lie on the Lumenal side of the membrane. N-linked (GlcNAc...) asparagine glycans are attached at residues N128, N172, and N229.

The protein belongs to the glycosyltransferase 31 family. Expressed in brain and kidney.

It is found in the golgi apparatus membrane. It catalyses the reaction a globoside Gb4Cer (d18:1(4E)) + UDP-alpha-D-galactose = a globoside GalGb4Cer (d18:1(4E)) + UDP + H(+). It participates in protein modification; protein glycosylation. In terms of biological role, catalyzes the transfer of Gal to GlcNAc-based acceptors with a preference for the core3 O-linked glycan GlcNAc(beta1,3)GalNAc structure. Can use glycolipid LC3Cer as an efficient acceptor. Also catalyzes the transfer of Gal to the terminal GalNAc unit of the globoside GB4, thereby synthesizing the glycolipid GB5, also known as the stage-specific embryonic antigen-3 (SSEA-3). The chain is Beta-1,3-galactosyltransferase 5 from Mus musculus (Mouse).